The sequence spans 432 residues: Cyclic 2,3-diphosphoglycerate synthetase (432 aa).

Belongs to the cyclic 2,3-diphosphoglycerate synthetase family.

The protein localises to the cytoplasm. The enzyme catalyses (2R)-2,3-bisphosphoglycerate + ATP + H(+) = cyclic (2R)-2,3-bisphosphoglycerate + ADP + phosphate. Functionally, catalyzes the formation of cyclic 2,3-diphosphoglycerate (cDPG) by formation of an intramolecular phosphoanhydride bond at the expense of ATP. The polypeptide is Cyclic 2,3-diphosphoglycerate synthetase (Thermococcus onnurineus (strain NA1)).